The chain runs to 549 residues: Hydroxylamine reductase (549 aa).

Positions 5, 8, 17, and 23 each coordinate [4Fe-4S] cluster. Hybrid [4Fe-2O-2S] cluster is bound by residues histidine 250, glutamate 274, cysteine 318, cysteine 404, cysteine 432, cysteine 457, glutamate 491, and lysine 493. Cysteine 404 bears the Cysteine persulfide mark.

The protein belongs to the HCP family. Requires [4Fe-4S] cluster as cofactor. The cofactor is hybrid [4Fe-2O-2S] cluster.

It is found in the cytoplasm. It carries out the reaction A + NH4(+) + H2O = hydroxylamine + AH2 + H(+). In terms of biological role, catalyzes the reduction of hydroxylamine to form NH(3) and H(2)O. The polypeptide is Hydroxylamine reductase (Geobacter metallireducens (strain ATCC 53774 / DSM 7210 / GS-15)).